The following is a 123-amino-acid chain: MPTIQQLIRKPREPKRVRSKSQHLESCPQKRGVCTRVYTTTPKKPNSAMRKVAKVRLTNGFEVISYIPGEKHNLQEHSVVLIRGGRVKDLPGVRYHILRGVLDTQGVKDRRQRRSKYGAKRPK.

The segment at 1 to 28 (MPTIQQLIRKPREPKRVRSKSQHLESCP) is disordered. Residue D89 is modified to 3-methylthioaspartic acid.

It belongs to the universal ribosomal protein uS12 family. In terms of assembly, part of the 30S ribosomal subunit. Contacts proteins S8 and S17. May interact with IF1 in the 30S initiation complex.

Functionally, with S4 and S5 plays an important role in translational accuracy. Interacts with and stabilizes bases of the 16S rRNA that are involved in tRNA selection in the A site and with the mRNA backbone. Located at the interface of the 30S and 50S subunits, it traverses the body of the 30S subunit contacting proteins on the other side and probably holding the rRNA structure together. The combined cluster of proteins S8, S12 and S17 appears to hold together the shoulder and platform of the 30S subunit. In Cereibacter sphaeroides (strain ATCC 17029 / ATH 2.4.9) (Rhodobacter sphaeroides), this protein is Small ribosomal subunit protein uS12.